The following is a 420-amino-acid chain: MRKVLALILAGGHGKRLGVLTEKIAKPAVPFGGKYRLIDFTLSNCVNSGIYHVGVLTQYRPHLLNNHINIGRPWDLDRKKGGVTILPPYLGGVAGWYRGTANAVYQNIEYVDSADPDFVLILSGDHVYAMDYNDIIDFHILKGAEGTIACIEVPPEETNRFGIMMTDLDSRIVDFEEKPQRARSNLASLGIYVFNWKFLKEYLIRDEQNNESTHDFGHDIIPLMINEGCQIYAFKFNGYWRDVGTVRSYWESNLELTRPIPPLNLYDRHWRFFTQTEEMPPAYCAPTSKIVNSIISEGCEIYGFVENSVIFQGVYIGENAVVKNSVVMTSTKIGENCVITDAVIAERVIVENRVIIGEGDDAKNKLDSDVYTGQITVIGMYSVIPSGSVIGKNCVVGVGVEKGDFKTQKVESGDYILHKE.

Alpha-D-glucose 1-phosphate contacts are provided by residues tyrosine 97, glycine 162, 177–178 (EK), and serine 188.

This sequence belongs to the bacterial/plant glucose-1-phosphate adenylyltransferase family. Homotetramer.

The catalysed reaction is alpha-D-glucose 1-phosphate + ATP + H(+) = ADP-alpha-D-glucose + diphosphate. Its pathway is glycan biosynthesis; glycogen biosynthesis. Involved in the biosynthesis of ADP-glucose, a building block required for the elongation reactions to produce glycogen. Catalyzes the reaction between ATP and alpha-D-glucose 1-phosphate (G1P) to produce pyrophosphate and ADP-Glc. The chain is Glucose-1-phosphate adenylyltransferase from Pseudothermotoga lettingae (strain ATCC BAA-301 / DSM 14385 / NBRC 107922 / TMO) (Thermotoga lettingae).